Consider the following 329-residue polypeptide: Tyrosine--tRNA ligase (329 aa).

Residues Y31, Y157, Q161, D164, and Q179 each coordinate L-tyrosine. The short motif at 220–224 (KMSKS) is the 'KMSKS' region element. K223 contributes to the ATP binding site.

Belongs to the class-I aminoacyl-tRNA synthetase family. TyrS type 4 subfamily. Homodimer.

It localises to the cytoplasm. The catalysed reaction is tRNA(Tyr) + L-tyrosine + ATP = L-tyrosyl-tRNA(Tyr) + AMP + diphosphate + H(+). Catalyzes the attachment of tyrosine to tRNA(Tyr) in a two-step reaction: tyrosine is first activated by ATP to form Tyr-AMP and then transferred to the acceptor end of tRNA(Tyr). This is Tyrosine--tRNA ligase from Picrophilus torridus (strain ATCC 700027 / DSM 9790 / JCM 10055 / NBRC 100828 / KAW 2/3).